The following is a 223-amino-acid chain: Ribosomal RNA small subunit methyltransferase G (223 aa).

S-adenosyl-L-methionine-binding positions include Gly-82, Leu-87, 133-134 (AE), and Arg-151.

The protein belongs to the methyltransferase superfamily. RNA methyltransferase RsmG family.

It is found in the cytoplasm. Its function is as follows. Specifically methylates the N7 position of guanine in position 518 of 16S rRNA. The chain is Ribosomal RNA small subunit methyltransferase G from Corynebacterium glutamicum (strain R).